The chain runs to 121 residues: Small ribosomal subunit protein uS13 (121 aa).

Residues 97 to 121 (VRGQRTRTNARTRRGARKTVAGKKK) form a disordered region. Over residues 100–121 (QRTRTNARTRRGARKTVAGKKK) the composition is skewed to basic residues.

Belongs to the universal ribosomal protein uS13 family. Part of the 30S ribosomal subunit. Forms a loose heterodimer with protein S19. Forms two bridges to the 50S subunit in the 70S ribosome.

In terms of biological role, located at the top of the head of the 30S subunit, it contacts several helices of the 16S rRNA. In the 70S ribosome it contacts the 23S rRNA (bridge B1a) and protein L5 of the 50S subunit (bridge B1b), connecting the 2 subunits; these bridges are implicated in subunit movement. Contacts the tRNAs in the A and P-sites. This Synechococcus sp. (strain WH7803) protein is Small ribosomal subunit protein uS13.